We begin with the raw amino-acid sequence, 50 residues long: Cytochrome c oxidase subunit 4 (50 aa).

Over Ala2 to Ile17 the chain is Cytoplasmic. The chain crosses the membrane as a helical span at residues Arg18–Asn49. Ser50 is a topological domain (periplasmic).

Its subcellular location is the cell inner membrane. It catalyses the reaction 4 Fe(II)-[cytochrome c] + O2 + 8 H(+)(in) = 4 Fe(III)-[cytochrome c] + 2 H2O + 4 H(+)(out). Its function is as follows. Not required for enzymatic activity or proton pumping of the cytochrome c oxidase complex. The polypeptide is Cytochrome c oxidase subunit 4 (ctaH) (Paracoccus denitrificans).